Here is a 678-residue protein sequence, read N- to C-terminus: MTPNEFFSIKYHILAKAELKAYIDKLADYLSQQSYLYHTLDKPIISDSDYDKLFRLLQDLVNDNPQFKPINSVLDRVGGEVLAGFETIKHKKKMTSLANVFSLEELRDFYDKIEYDIELECEPKMDGLAISIFYKNGKFDYAVTRGDGIQGEKVSENVKTIRNVPLKLNTSNPPEELEVRGEIILDKQSFLSLNEYMQTHENKTFANPRNAAAGSIRMLDSKVVAKRPLKLYSYGIGYFSKDFVYPETQFELMQLLQSFGFTISDNMFLAKNFSEVEEYHHKMSHQRADLAYDIDGLVFKVNNIKLQDTIGYTARGPKWAIAYKFPAEEVESEVLNVEFQVGRTGAITPVARLKPVAVGGVIVSNATLHNINEIKRKDIRVGDRVIVRRAGDVIPEVVKSLPQYRKSDAQMVEMPTNCPVCDSKIENVNDQAIYRCTGGWHCQAQTTERLKHFVSRKAMDIDKLGAKLIEQLVAANLIKYPADIYKLNFEQLTGLERMAAKSSQNVLDSITKSKEPSLARFIFAIGIKDIGEVSSDALANHFGSLESFRDAKFEELIEINDIGEIMANNIVSFWHDSLNIKIVEEFLAIGIKIQNPVKVEHAYNESFTGKTVVITGSFENYGRTELTQLLKSIGAKVTSSVSKKTDMVICGDNAGSKLTKAQELGVEVILEDNLKDLL.

NAD(+) contacts are provided by residues 47-51 (DSDYD), 96-97 (SL), and glutamate 122. Lysine 124 serves as the catalytic N6-AMP-lysine intermediate. Arginine 145, glutamate 182, lysine 300, and lysine 324 together coordinate NAD(+). 4 residues coordinate Zn(2+): cysteine 418, cysteine 421, cysteine 436, and cysteine 442. The region spanning 602–678 (AYNESFTGKT…ILEDNLKDLL (77 aa)) is the BRCT domain.

It belongs to the NAD-dependent DNA ligase family. LigA subfamily. It depends on Mg(2+) as a cofactor. Requires Mn(2+) as cofactor.

It carries out the reaction NAD(+) + (deoxyribonucleotide)n-3'-hydroxyl + 5'-phospho-(deoxyribonucleotide)m = (deoxyribonucleotide)n+m + AMP + beta-nicotinamide D-nucleotide.. Its function is as follows. DNA ligase that catalyzes the formation of phosphodiester linkages between 5'-phosphoryl and 3'-hydroxyl groups in double-stranded DNA using NAD as a coenzyme and as the energy source for the reaction. It is essential for DNA replication and repair of damaged DNA. The protein is DNA ligase of Francisella tularensis subsp. tularensis (strain SCHU S4 / Schu 4).